Here is a 216-residue protein sequence, read N- to C-terminus: Cyclo(L-leucyl-L-leucyl) synthase (216 aa).

Ser-14 acts as the Nucleophile in catalysis. Residues Asn-17, 155–159 (YIFDE), and Tyr-179 each bind substrate.

It belongs to the CDPS family.

It carries out the reaction 2 L-leucyl-tRNA(Leu) = cyclo(L-leucyl-L-leucyl) + 2 tRNA(Leu) + 2 H(+). It uses activated amino acids in the form of aminoacyl-tRNAs (aa-tRNAs) as substrates to catalyze the ATP-independent formation of cyclodipeptides which are intermediates in diketopiperazine (DKP) biosynthetic pathways. Catalyzes the formation of cyclo(L-Leu-L-Leu) (cLL) from L-leucyl-tRNA(Leu). Can incorporate various nonpolar residues, such as L-leucine and L-methionine, into cyclodipeptides. In Corynebacterium jeikeium (strain K411), this protein is Cyclo(L-leucyl-L-leucyl) synthase.